Consider the following 183-residue polypeptide: MKTLEESIDALMTRYKENVPVRYTEYVEEWNSPIYGTVIDENTVEWTPCRQPEALNFDDLESALEMSFHQSIKTLFGRWYAGDLALDYQGHTISLLQTQSAEDGERLLENITGHILMKRRLKQPETVFIGLGSEDDGLLVTIDNQSGAVGLEWVGKEQHDVLSDSLAAWLDNCQPQVETDKNS.

It belongs to the Syd family.

It is found in the cell inner membrane. Its function is as follows. Interacts with the SecY protein in vivo. May bind preferentially to an uncomplexed state of SecY, thus functioning either as a chelating agent for excess SecY in the cell or as a regulatory factor that negatively controls the translocase function. The protein is Protein Syd of Idiomarina loihiensis (strain ATCC BAA-735 / DSM 15497 / L2-TR).